The chain runs to 291 residues: Bifunctional protein FolD (291 aa).

Residues 168 to 170 (GRG), Thr-195, and Val-236 contribute to the NADP(+) site.

The protein belongs to the tetrahydrofolate dehydrogenase/cyclohydrolase family. In terms of assembly, homodimer.

The enzyme catalyses (6R)-5,10-methylene-5,6,7,8-tetrahydrofolate + NADP(+) = (6R)-5,10-methenyltetrahydrofolate + NADPH. It catalyses the reaction (6R)-5,10-methenyltetrahydrofolate + H2O = (6R)-10-formyltetrahydrofolate + H(+). Its pathway is one-carbon metabolism; tetrahydrofolate interconversion. Functionally, catalyzes the oxidation of 5,10-methylenetetrahydrofolate to 5,10-methenyltetrahydrofolate and then the hydrolysis of 5,10-methenyltetrahydrofolate to 10-formyltetrahydrofolate. The chain is Bifunctional protein FolD from Bifidobacterium adolescentis (strain ATCC 15703 / DSM 20083 / NCTC 11814 / E194a).